A 332-amino-acid chain; its full sequence is MRRSFFCIDSHTCGNPVRVVAGGGPLLPHVSMAERREIFVRDHDWVRKALMFEPRGHDIMSGAIIYPSVREDCDFAALFIEVSGCLPMCGAGTIGLATVAIEEGLITPRVPGRLSIETPAGKVDVDYQLKDGFVEAVRLFNVASYLHSRDVVVDVSGLGSLSVDIAYGGNFYAVIEPQENWSGLDGMSASDIVTLSQRLRDALSVVCDPVHPDDERIRGVHHAIWCDAAGSENADGRGAVFYGDKAIDRSPGGTGTSARMAQLYGRGRLGIGDSFRNESLIGTVFEGRIEGAALVGGIPGILPSIGGWARVIGHNTIFVDERDPLAHGFQIR.

Catalysis depends on cysteine 89, which acts as the Proton acceptor. Substrate contacts are provided by residues histidine 222, aspartate 248, and 253-254; that span reads GT.

It belongs to the proline racemase family.

It catalyses the reaction trans-4-hydroxy-L-proline = cis-4-hydroxy-D-proline. Functionally, catalyzes the epimerization of trans-4-hydroxy-L-proline (t4LHyp) to cis-4-hydroxy-D-proline (c4DHyp). Is likely involved in a degradation pathway that converts t4LHyp to alpha-ketoglutarate. Displays no proline racemase activity. The polypeptide is 4-hydroxyproline 2-epimerase 2 (Rhizobium rhizogenes (strain K84 / ATCC BAA-868) (Agrobacterium radiobacter)).